Here is a 545-residue protein sequence, read N- to C-terminus: Hydroxylamine reductase (545 aa).

Cys-3, Cys-6, Cys-15, and Cys-21 together coordinate [4Fe-4S] cluster. Residues His-240, Glu-264, Cys-309, Cys-401, Cys-429, Cys-454, Glu-488, and Lys-490 each contribute to the hybrid [4Fe-2O-2S] cluster site. Cysteine persulfide is present on Cys-401.

This sequence belongs to the HCP family. [4Fe-4S] cluster is required as a cofactor. Hybrid [4Fe-2O-2S] cluster serves as cofactor.

The protein resides in the cytoplasm. It carries out the reaction A + NH4(+) + H2O = hydroxylamine + AH2 + H(+). In terms of biological role, catalyzes the reduction of hydroxylamine to form NH(3) and H(2)O. This is Hydroxylamine reductase from Rippkaea orientalis (strain PCC 8801 / RF-1) (Cyanothece sp. (strain PCC 8801)).